The following is a 205-amino-acid chain: Adenylyl-sulfate kinase (205 aa).

Position 31-38 (31-38) interacts with ATP; that stretch reads GLSGAGKS. Residue Ser-105 is the Phosphoserine intermediate of the active site.

It belongs to the APS kinase family.

It carries out the reaction adenosine 5'-phosphosulfate + ATP = 3'-phosphoadenylyl sulfate + ADP + H(+). Its pathway is sulfur metabolism; hydrogen sulfide biosynthesis; sulfite from sulfate: step 2/3. Functionally, catalyzes the synthesis of activated sulfate. This Shewanella sp. (strain MR-4) protein is Adenylyl-sulfate kinase.